Consider the following 251-residue polypeptide: Ubiquinone/menaquinone biosynthesis C-methyltransferase UbiE (251 aa).

S-adenosyl-L-methionine contacts are provided by residues Thr-74, Asp-95, 123-124 (NA), and Ser-140.

The protein belongs to the class I-like SAM-binding methyltransferase superfamily. MenG/UbiE family.

The enzyme catalyses a 2-demethylmenaquinol + S-adenosyl-L-methionine = a menaquinol + S-adenosyl-L-homocysteine + H(+). It carries out the reaction a 2-methoxy-6-(all-trans-polyprenyl)benzene-1,4-diol + S-adenosyl-L-methionine = a 5-methoxy-2-methyl-3-(all-trans-polyprenyl)benzene-1,4-diol + S-adenosyl-L-homocysteine + H(+). It participates in quinol/quinone metabolism; menaquinone biosynthesis; menaquinol from 1,4-dihydroxy-2-naphthoate: step 2/2. The protein operates within cofactor biosynthesis; ubiquinone biosynthesis. Methyltransferase required for the conversion of demethylmenaquinol (DMKH2) to menaquinol (MKH2) and the conversion of 2-polyprenyl-6-methoxy-1,4-benzoquinol (DDMQH2) to 2-polyprenyl-3-methyl-6-methoxy-1,4-benzoquinol (DMQH2). In Salmonella arizonae (strain ATCC BAA-731 / CDC346-86 / RSK2980), this protein is Ubiquinone/menaquinone biosynthesis C-methyltransferase UbiE.